Reading from the N-terminus, the 361-residue chain is Phosphoserine aminotransferase (361 aa).

Residue Arg42 coordinates L-glutamate. Pyridoxal 5'-phosphate is bound by residues 76–77 (AR), Trp102, Thr153, Asp173, and Gln196. Position 197 is an N6-(pyridoxal phosphate)lysine (Lys197). 238-239 (NT) lines the pyridoxal 5'-phosphate pocket.

The protein belongs to the class-V pyridoxal-phosphate-dependent aminotransferase family. SerC subfamily. In terms of assembly, homodimer. Pyridoxal 5'-phosphate serves as cofactor.

Its subcellular location is the cytoplasm. It carries out the reaction O-phospho-L-serine + 2-oxoglutarate = 3-phosphooxypyruvate + L-glutamate. The enzyme catalyses 4-(phosphooxy)-L-threonine + 2-oxoglutarate = (R)-3-hydroxy-2-oxo-4-phosphooxybutanoate + L-glutamate. It functions in the pathway amino-acid biosynthesis; L-serine biosynthesis; L-serine from 3-phospho-D-glycerate: step 2/3. The protein operates within cofactor biosynthesis; pyridoxine 5'-phosphate biosynthesis; pyridoxine 5'-phosphate from D-erythrose 4-phosphate: step 3/5. Functionally, catalyzes the reversible conversion of 3-phosphohydroxypyruvate to phosphoserine and of 3-hydroxy-2-oxo-4-phosphonooxybutanoate to phosphohydroxythreonine. This Mannheimia succiniciproducens (strain KCTC 0769BP / MBEL55E) protein is Phosphoserine aminotransferase.